Consider the following 376-residue polypeptide: Alcohol dehydrogenase 6 (376 aa).

Residues cysteine 47, histidine 69, cysteine 99, cysteine 102, cysteine 105, cysteine 113, and cysteine 175 each contribute to the Zn(2+) site. NAD(+) is bound by residues 200–205 (GLGGVG), aspartate 224, arginine 229, 293–295 (VGA), and arginine 371.

Belongs to the zinc-containing alcohol dehydrogenase family. Class-V subfamily. As to quaternary structure, dimer. Requires Zn(2+) as cofactor.

The protein resides in the cytoplasm. The enzyme catalyses a primary alcohol + NAD(+) = an aldehyde + NADH + H(+). The catalysed reaction is a secondary alcohol + NAD(+) = a ketone + NADH + H(+). Alcohol dehydrogenase. Catalyzes the NAD-dependent oxidation of primary alcohols to the corresponding aldehydes. Oxidizes secondary alcohols to the corresponding ketones. In Rattus norvegicus (Rat), this protein is Alcohol dehydrogenase 6 (Adh6).